The following is a 126-amino-acid chain: MGFLWALFSVGLVSAAQLLLRSAMVALPPLTDIVAFLQHLLHFQPGTVGLFFGLLGYLLSMVCWYFALHRLPLSKAYALLSLSYILVWAAAIWLPGWHEPFYWQSLLGVTIIVAGVLTIFWPVKRR.

A helical transmembrane segment spans residues methionine 1–arginine 21. Residues serine 22–threonine 47 lie on the Periplasmic side of the membrane. A helical membrane pass occupies residues valine 48–leucine 68. Residues histidine 69–alanine 76 are Cytoplasmic-facing. Residues tyrosine 77–tryptophan 97 form a helical membrane-spanning segment. Topologically, residues histidine 98–proline 100 are periplasmic. Residues phenylalanine 101 to tryptophan 121 form a helical membrane-spanning segment. Over proline 122–arginine 126 the chain is Cytoplasmic.

This sequence belongs to the ArnF family. In terms of assembly, heterodimer of ArnE and ArnF.

The protein resides in the cell inner membrane. It functions in the pathway bacterial outer membrane biogenesis; lipopolysaccharide biosynthesis. Its function is as follows. Translocates 4-amino-4-deoxy-L-arabinose-phosphoundecaprenol (alpha-L-Ara4N-phosphoundecaprenol) from the cytoplasmic to the periplasmic side of the inner membrane. The sequence is that of Probable 4-amino-4-deoxy-L-arabinose-phosphoundecaprenol flippase subunit ArnF from Klebsiella pneumoniae (strain 342).